A 140-amino-acid chain; its full sequence is UPF0336 protein TW736 (140 aa).

The protein belongs to the UPF0336 family.

This is UPF0336 protein TW736 from Tropheryma whipplei (strain TW08/27) (Whipple's bacillus).